The sequence spans 640 residues: Leucine-rich repeat-containing protein 4C (640 aa).

An N-terminal signal peptide occupies residues 1–44; the sequence is MLNKMTLHPQQIMIGPRFNRALFDPLLVVLLALQLLVVAGLVRA. The region spanning 45-76 is the LRRNT domain; it reads QTCPSVCSCSNQFSKVICVRKNLREVPDGIST. 9 LRR repeats span residues 77–98, 101–122, 125–146, 149–170, 173–195, 198–219, 220–241, 244–265, and 268–289; these read NTRL…SFKH, HLEI…AFNG, NLNT…AFVY, KLKE…AFNR, SLRR…AFEG, NLRY…TPLI, KLDE…SFQG, HLQK…AFDN, and SLVE…LFTP. Positions 301–353 constitute an LRRCT domain; it reads NPWNCNCDILWLSWWIKDMAPSNTACCARCNTPPNLKGRYIGELDQNYFTCYA. One can recognise an Ig-like C2-type domain in the interval 354 to 442; it reads PVIVEPPADL…GNTTASATLN (89 aa). Cys-375 and Cys-426 are joined by a disulfide. The segment at 463 to 483 is disordered; it reads EPSQDEARTTDNNVGPTPVVD. The chain crosses the membrane as a helical span at residues 528–548; it reads IIIGCFVAITLMAAVMLVIFY. Position 631 is a phosphoserine (Ser-631).

Interacts with NTNG1 and WHRN. As to expression, highly expressed in the cerebral cortex, including frontal, parietal and occipital lobes. Putamen, amygdala, hippocampus and medulla oblongata show moderate expression. Caudate nucleus and thalamus express small amounts, whereas other brain regions show very weak or no expression.

It is found in the postsynaptic cell membrane. In terms of biological role, may promote neurite outgrowth of developing thalamic neurons. The protein is Leucine-rich repeat-containing protein 4C (LRRC4C) of Homo sapiens (Human).